The following is a 162-amino-acid chain: Selenoprotein F (162 aa).

The signal sequence occupies residues M1–A28. A non-standard amino acid (selenocysteine) is located at residue U93.

The protein belongs to the selenoprotein M/F family. As to quaternary structure, forms a tight complex with UGGT1/UGCGL1. Interacts with UGGT2/UGCGL2. Interacts with RDH11.

Its subcellular location is the endoplasmic reticulum lumen. Its function is as follows. May be involved in redox reactions associated with the formation of disulfide bonds. May contribute to the quality control of protein folding in the endoplasmic reticulum. May regulate protein folding by enhancing the catalytic activity of UGGT1/UGCGL1 and UGGT2/UGCGL2. This Mus musculus (Mouse) protein is Selenoprotein F.